We begin with the raw amino-acid sequence, 292 residues long: 4-hydroxy-tetrahydrodipicolinate synthase (292 aa).

T45 is a binding site for pyruvate. Y134 functions as the Proton donor/acceptor in the catalytic mechanism. Catalysis depends on K162, which acts as the Schiff-base intermediate with substrate. V204 contributes to the pyruvate binding site.

It belongs to the DapA family. In terms of assembly, homotetramer; dimer of dimers.

Its subcellular location is the cytoplasm. The enzyme catalyses L-aspartate 4-semialdehyde + pyruvate = (2S,4S)-4-hydroxy-2,3,4,5-tetrahydrodipicolinate + H2O + H(+). It participates in amino-acid biosynthesis; L-lysine biosynthesis via DAP pathway; (S)-tetrahydrodipicolinate from L-aspartate: step 3/4. In terms of biological role, catalyzes the condensation of (S)-aspartate-beta-semialdehyde [(S)-ASA] and pyruvate to 4-hydroxy-tetrahydrodipicolinate (HTPA). This Marinobacter nauticus (strain ATCC 700491 / DSM 11845 / VT8) (Marinobacter aquaeolei) protein is 4-hydroxy-tetrahydrodipicolinate synthase.